Here is a 478-residue protein sequence, read N- to C-terminus: Glycogen synthase (478 aa).

Position 15 (lysine 15) interacts with ADP-alpha-D-glucose.

The protein belongs to the glycosyltransferase 1 family. Bacterial/plant glycogen synthase subfamily.

It carries out the reaction [(1-&gt;4)-alpha-D-glucosyl](n) + ADP-alpha-D-glucose = [(1-&gt;4)-alpha-D-glucosyl](n+1) + ADP + H(+). Its pathway is glycan biosynthesis; glycogen biosynthesis. In terms of biological role, synthesizes alpha-1,4-glucan chains using ADP-glucose. This Lactococcus lactis subsp. lactis (strain IL1403) (Streptococcus lactis) protein is Glycogen synthase.